The sequence spans 95 residues: DNA-directed RNA polymerase subunit Rpo6 (95 aa).

The protein belongs to the archaeal Rpo6/eukaryotic RPB6 RNA polymerase subunit family. As to quaternary structure, part of the RNA polymerase complex.

It localises to the cytoplasm. The catalysed reaction is RNA(n) + a ribonucleoside 5'-triphosphate = RNA(n+1) + diphosphate. Functionally, DNA-dependent RNA polymerase (RNAP) catalyzes the transcription of DNA into RNA using the four ribonucleoside triphosphates as substrates. The sequence is that of DNA-directed RNA polymerase subunit Rpo6 from Saccharolobus islandicus (strain M.16.27) (Sulfolobus islandicus).